A 140-amino-acid chain; its full sequence is Large ribosomal subunit protein uL14 (140 aa).

The protein belongs to the universal ribosomal protein uL14 family.

The protein is Large ribosomal subunit protein uL14 (rpl-23) of Caenorhabditis elegans.